Consider the following 663-residue polypeptide: Polyunsaturated fatty acid lipoxygenase ALOX15 (663 aa).

Residues 2-115 (GLYRVRVSTG…ILSLPEGTAR (114 aa)) form the PLAT domain. Residues 116–663 (TVVDDPQGLF…PSRVENSVAI (548 aa)) enclose the Lipoxygenase domain. 5 residues coordinate Fe cation: histidine 361, histidine 366, histidine 541, histidine 545, and isoleucine 663.

The protein belongs to the lipoxygenase family. Interacts with PEBP1; in response to IL13/interleukin-13, prevents the interaction of PEBP1 with RAF1 to activate the ERK signaling cascade. It depends on Fe cation as a cofactor.

The protein localises to the cytoplasm. Its subcellular location is the cytosol. It is found in the cell membrane. The protein resides in the lipid droplet. It carries out the reaction (5Z,8Z,11Z,14Z)-eicosatetraenoate + O2 = (12S)-hydroperoxy-(5Z,8Z,10E,14Z)-eicosatetraenoate. The catalysed reaction is (5Z,8Z,11Z,14Z)-eicosatetraenoate + O2 = (15S)-hydroperoxy-(5Z,8Z,11Z,13E)-eicosatetraenoate. It catalyses the reaction (9Z,12Z)-octadecadienoate + O2 = (13S)-hydroperoxy-(9Z,11E)-octadecadienoate. The enzyme catalyses (5Z,8Z,11Z,14Z)-eicosatetraenoate + 2 O2 = (14R,15S)-dihydroperoxy-(5Z,8Z,10E,12E)-eicosatetraenoate. It carries out the reaction (5Z,8Z,11Z,14Z)-eicosatetraenoate + 2 O2 = (8S,15S)-dihydroperoxy-(5Z,9E,11Z,13E)-eicosatetraenoate. The catalysed reaction is (14S,15R)-epoxy-(5Z,8Z,11Z)-eicosatrienoate + O2 = (8S)-hydroperoxy-(14S,15R)-epoxy-(5Z,9E,11Z)-eicosatrienoate. It catalyses the reaction (14S,15R)-epoxy-(5Z,8Z,11Z)-eicosatrienoate + O2 = (12S)-hydroperoxy-(14S,15R)-epoxy-(5Z,8Z,10E)-eicosatrienoate. The enzyme catalyses (14R,15S)-epoxy-(5Z,8Z,11Z)-eicosatrienoate + O2 = (5S)-hydroperoxy-(14R,15S)-epoxy-(6E,8Z,11Z)-eicosatrienoate. It carries out the reaction (14R,15S)-epoxy-(5Z,8Z,11Z)-eicosatrienoate + O2 = (12S)-hydroperoxy-(14R,15S)-epoxy-(5Z,8Z,10E)-eicosatrienoate. The catalysed reaction is (15R)-hydroperoxy-(5Z,8Z,11Z,13E)-eicosatetraenoate = 15-oxo-(5Z,8Z,11Z,13E)-eicosatetraenoate + H2O. It catalyses the reaction (15S)-hydroperoxy-(5Z,8Z,11Z,13E)-eicosatetraenoate = (14S,15S)-epoxy-(5Z,8Z,10E,12E)-eicosatetraenoate + H2O. The enzyme catalyses (12S)-hydroperoxy-(5Z,8Z,10E,14Z)-eicosatetraenoate = (8S)-hydroxy-(11S,12S)-epoxy-(5Z,9E,14Z)-eicosatrienoate. It carries out the reaction (4Z,7Z,10Z,13Z,16Z,19Z)-docosahexaenoate + O2 = 14-hydroperoxy-(4Z,7Z,10Z,12E,16Z,19Z)-docosahexaenoate. The catalysed reaction is (4Z,7Z,10Z,13Z,16Z)-docosapentaenoate + O2 = 14-hydroperoxy-(4Z,7Z,10Z,12E,16Z)-docosapentaenoate. It catalyses the reaction (7Z,10Z,13Z,16Z,19Z)-docosapentaenoate + O2 = 14-hydroperoxy-(7Z,10Z,12E,16Z,19Z)-docosapentaenoate. The enzyme catalyses (4Z,7Z,10Z,13Z,16Z,19Z)-docosahexaenoate + O2 = (14S)-hydroperoxy-(4Z,7Z,10Z,12E,16Z,19Z)-docosahexaenoate. It carries out the reaction (4Z,7Z,10Z,13Z,16Z,19Z)-docosahexaenoate + O2 = (17S)-hydroperoxy-(4Z,7Z,10Z,13Z,15E,19Z)-docosahexaenoate. The catalysed reaction is (7S)-hydroperoxy-(4Z,8E,10Z,13Z,16Z,19Z)-docosahexaenoate + O2 = (7S,14S)-dihydroperoxy-(4Z,8E,10Z,12E,16Z,19Z)-docosahexaenoate. It catalyses the reaction (7S)-hydroperoxy-(4Z,8E,10Z,13Z,16Z,19Z)-docosahexaenoate + O2 = (7S,17S)-dihydroperoxy-(4Z,8E,10Z,13Z,15E,19Z)-docosahexaenoate. The enzyme catalyses (4Z,7Z,10Z,13Z,16Z,19Z)-docosahexaenoate + O2 = (11S)-hydroperoxy-(4Z,7Z,9E,13Z,16Z,19Z)-docosahexaenoate. It carries out the reaction N-(5Z,8Z,11Z,14Z)-eicosatetraenoyl-taurine + O2 = N-(12S)-hydroperoxy-(5Z,8Z,10E,14Z)-eicosatetraenoyl-taurine. The catalysed reaction is N-(5Z,8Z,11Z,14Z)-eicosatetraenoyl-gamma-aminobutanoate + O2 = N-(12S)-hydroperoxy-(5Z,8Z,10E,14Z)-eicosatetraenoyl-gamma-aminobutanoate. It catalyses the reaction N-(5Z,8Z,11Z,14Z)-eicosatetraenoyl-glycine + O2 = N-(12S)-hydroperoxy-(5Z,8Z,10E,14Z)-eicosatetraenoyl-glycine. The enzyme catalyses N-(5Z,8Z,11Z,14Z)-eicosatetraenoyl-L-alanine + O2 = N-(12S)-hydroperoxy-(5Z,8Z,10E,14Z)-eicosatetraenoyl-alanine. It carries out the reaction N-(5Z,8Z,11Z,14Z)-eicosatetraenoyl-taurine + O2 = N-(15S)-hydroperoxy-(5Z,8Z,11Z,13E)-eicosatetraenoyl-taurine. The catalysed reaction is N-(5Z,8Z,11Z,14Z)-eicosatetraenoyl-gamma-aminobutanoate + O2 = N-(15S)-hydroperoxy-(5Z,8Z,11Z,13E)-eicosatetraenoyl-gamma-aminobutanoate. It catalyses the reaction N-(5Z,8Z,11Z,14Z)-eicosatetraenoyl-glycine + O2 = N-(15S)-hydroperoxy-(5Z,8Z,11Z,13E)-eicosatetraenoyl-glycine. The enzyme catalyses N-(5Z,8Z,11Z,14Z)-eicosatetraenoyl-L-alanine + O2 = N-(15S)-hydroperoxy-(5Z,8Z,11Z,13E)-eicosatetraenoyl-alanine. It functions in the pathway lipid metabolism; hydroperoxy eicosatetraenoic acid biosynthesis. Functionally, non-heme iron-containing dioxygenase that catalyzes the stereo-specific peroxidation of free and esterified polyunsaturated fatty acids generating a spectrum of bioactive lipid mediators. It inserts peroxyl groups at C12 or C15 of arachidonate ((5Z,8Z,11Z,14Z)-eicosatetraenoate) producing both 12-hydroperoxyeicosatetraenoate/12-HPETE and 15-hydroperoxyeicosatetraenoate/15-HPETE. It may then act on 12-HPETE to produce hepoxilins, which may show pro-inflammatory properties. Can also peroxidize linoleate ((9Z,12Z)-octadecadienoate) to 13-hydroperoxyoctadecadienoate. May participate in the sequential oxidations of DHA ((4Z,7Z,10Z,13Z,16Z,19Z)-docosahexaenoate) to generate specialized pro-resolving mediators (SPMs)like resolvin D5 ((7S,17S)-diHPDHA) and (7S,14S)-diHPDHA, that actively down-regulate the immune response and have anti-aggregation properties with platelets. Can convert epoxy fatty acids to hydroperoxy-epoxides derivatives followed by an intramolecular nucleophilic substitution leading to the formation of monocyclic endoperoxides. Plays an important role during the maintenance of self-tolerance by peroxidizing membrane-bound phosphatidylethanolamine which can then signal the sorting process for clearance of apoptotic cells during inflammation and prevent an autoimmune response. In addition to its role in the immune and inflammatory responses, this enzyme may play a role in epithelial wound healing in the cornea through production of lipoxin A4 (LXA(4)) and docosahexaenoic acid-derived neuroprotectin D1 (NPD1; 10R,17S-HDHA), both lipid autacoids exhibit anti-inflammatory and neuroprotective properties. Furthermore, it may regulate actin polymerization which is crucial for several biological processes such as the phagocytosis of apoptotic cells. It is also implicated in the generation of endogenous ligands for peroxisome proliferator activated receptor (PPAR-gamma), hence modulating macrophage development and function. It may also exert a negative effect on skeletal development by regulating bone mass through this pathway. As well as participates in ER stress and downstream inflammation in adipocytes, pancreatic islets, and liver. Finally, it is also involved in the cellular response to IL13/interleukin-13. The sequence is that of Polyunsaturated fatty acid lipoxygenase ALOX15 from Sus scrofa (Pig).